The sequence spans 255 residues: Aliphatic sulfonates import ATP-binding protein SsuB (255 aa).

One can recognise an ABC transporter domain in the interval 12 to 233; the sequence is LLLNAVSKHY…RLGSVRLAEL (222 aa). Residue 44-51 participates in ATP binding; the sequence is GRSGGGKS.

Belongs to the ABC transporter superfamily. Aliphatic sulfonates importer (TC 3.A.1.17.2) family. As to quaternary structure, the complex is composed of two ATP-binding proteins (SsuB), two transmembrane proteins (SsuC) and a solute-binding protein (SsuA).

Its subcellular location is the cell inner membrane. The enzyme catalyses ATP + H2O + aliphatic sulfonate-[sulfonate-binding protein]Side 1 = ADP + phosphate + aliphatic sulfonateSide 2 + [sulfonate-binding protein]Side 1.. In terms of biological role, part of the ABC transporter complex SsuABC involved in aliphatic sulfonates import. Responsible for energy coupling to the transport system. This is Aliphatic sulfonates import ATP-binding protein SsuB from Escherichia coli O6:K15:H31 (strain 536 / UPEC).